The primary structure comprises 154 residues: Endoribonuclease YbeY (154 aa).

Residues histidine 113, histidine 117, and histidine 123 each coordinate Zn(2+).

Belongs to the endoribonuclease YbeY family. Requires Zn(2+) as cofactor.

Its subcellular location is the cytoplasm. Functionally, single strand-specific metallo-endoribonuclease involved in late-stage 70S ribosome quality control and in maturation of the 3' terminus of the 16S rRNA. This is Endoribonuclease YbeY from Vibrio cholerae serotype O1 (strain ATCC 39315 / El Tor Inaba N16961).